A 38-amino-acid polypeptide reads, in one-letter code: MLMACYSAGQLGCLVFCNEAEYSYGKCIGRGRCCCYDL.

Intrachain disulfides connect Cys5-Cys27, Cys13-Cys33, and Cys17-Cys34.

The protein belongs to the DEFL family.

The chain is Putative defensin-like protein 105 from Arabidopsis thaliana (Mouse-ear cress).